The following is a 160-amino-acid chain: Ureidoglycolate lyase (160 aa).

This sequence belongs to the ureidoglycolate lyase family. In terms of assembly, homodimer. The cofactor is Ni(2+).

The catalysed reaction is (S)-ureidoglycolate = urea + glyoxylate. It participates in nitrogen metabolism; (S)-allantoin degradation. In terms of biological role, catalyzes the catabolism of the allantoin degradation intermediate (S)-ureidoglycolate, generating urea and glyoxylate. Involved in the utilization of allantoin as nitrogen source. The polypeptide is Ureidoglycolate lyase (Salmonella enteritidis).